The chain runs to 181 residues: Salmonella anti-inflammatory response activator (181 aa).

Residues 4 to 24 (FVYIYILVIYGSYLWFSLGGN) traverse the membrane as a helical segment.

Interacts with host (human) STAT3.

It is found in the membrane. It localises to the host cytoplasm. In terms of biological role, a Salmonella strain-specific effector that induces a host STAT3-dependent anti-inflammatory pathway. In bacteria-infected host cells (human) leads to phosphorylation of host STAT3, at least on 'Tyr-705' and interleukin-10 (IL-10, IL10) production; expressing the gene alone in host cells induces STAT3 phosphorylation and IL-10 production. IL-10 production requires STAT3 in infected cells. Contributes to virulence in mouse infection models. Encoded in only a few S.typhimurium serovars, it may be a specific effector for adaptation to bovine hosts. The sequence is that of Salmonella anti-inflammatory response activator from Salmonella typhimurium (strain 14028s / SGSC 2262).